The chain runs to 230 residues: Alpha-S1-casein (230 aa).

Positions 1–15 (MKLLILTCLVAVALA) are cleaved as a signal peptide. Phosphoserine occurs at positions 33, 83, 85, 86, 87, and 88. Positions 60–83 (DELKDTRNEPTEDHIMEDTERKES) are enriched in basic and acidic residues. Disordered stretches follow at residues 60-103 (DELK…DILK) and 211-230 (TPEG…PQWW). Low complexity predominate over residues 84 to 96 (GSSSSEEVVSSTT).

Belongs to the alpha-casein family. As to expression, mammary gland specific. Secreted in milk.

The protein localises to the secreted. Functionally, important role in the capacity of milk to transport calcium phosphate. The sequence is that of Alpha-S1-casein (CSN1S1) from Camelus dromedarius (Dromedary).